Consider the following 152-residue polypeptide: CASP-like protein 5B3 (152 aa).

Over 1–21 (MIDIPGTPGTLTGLVLRISQC) the chain is Cytoplasmic. The next 2 membrane-spanning stretches (helical) occupy residues 22 to 42 (VFAAGSISYMVTSGGFFSFTA) and 43 to 63 (FCYLIAAMGLQVIWSFGLAIL). Topologically, residues 64–77 (DTFALVRKKTLLSP) are extracellular. The helical transmembrane segment at 78 to 98 (VLVSLFVVGDWVTSTLSLAGA) threads the bilayer. The Cytoplasmic portion of the chain corresponds to 99–127 (SSSAGITVLYFGDLGSCSFEAECWKYQLS). A helical transmembrane segment spans residues 128–148 (VALAFLCWITIAVSSLTTLWL). The Extracellular segment spans residues 149–152 (LASA).

This sequence belongs to the Casparian strip membrane proteins (CASP) family. In terms of assembly, homodimer and heterodimers. In terms of tissue distribution, expressed in the stele of the root and in leaves.

It localises to the cell membrane. The chain is CASP-like protein 5B3 from Arabidopsis thaliana (Mouse-ear cress).